The sequence spans 746 residues: Disintegrin and metalloproteinase domain-containing protein 18 (746 aa).

The first 16 residues, 1 to 16 (MFFLLALLTELGRLQA), serve as a signal peptide directing secretion. A propeptide spanning residues 17–183 (HVGSEGIFLH…QKKNLSKLLP (167 aa)) is cleaved from the precursor. N36, N122, N149, N156, N177, and N294 each carry an N-linked (GlcNAc...) asparagine glycan. The Extracellular segment spans residues 177–687 (NLSKLLPQYL…EKGYNAHWNN (511 aa)). The Peptidase M12B domain maps to 184–381 (QYLEIYIIVE…FEAKCLQKLS (198 aa)). Disulfide bonds link C293–C376, C335–C360, C337–C342, and C450–C471. N-linked (GlcNAc...) asparagine glycans are attached at residues N359, N465, N611, and N625. Positions 390–479 (QPVCGNGILE…DCVPDTYALN (90 aa)) constitute a Disintegrin domain. The EGF-like domain occupies 620-654 (TGYNCNTTTKCKGKGICNNFGNCQCFPGHKPPDCK). 3 disulfide bridges follow: C624–C636, C630–C642, and C644–C653. The helical transmembrane segment at 688 to 708 (WFILSFYIVLPFFIIFTIVIF) threads the bilayer. At 709–746 (KRNEIRKLCNRENTELIHPLYQKAMMWNINIAQNFRSK) the chain is on the cytoplasmic side.

In terms of processing, the prodomain and the metalloprotease-like domain are cleaved during the epididymal maturation of the spermatozoa. In terms of tissue distribution, expressed predominantly in adult and prepubertal testis.

It is found in the membrane. In terms of biological role, sperm surface membrane protein that may be involved in spermatogenesis and fertilization. This is a non catalytic metalloprotease-like protein. The chain is Disintegrin and metalloproteinase domain-containing protein 18 (ADAM18) from Macaca fascicularis (Crab-eating macaque).